The following is a 294-amino-acid chain: UDP-3-O-acyl-N-acetylglucosamine deacetylase (294 aa).

Zn(2+) contacts are provided by histidine 75, histidine 232, and aspartate 236. Histidine 259 (proton donor) is an active-site residue.

It belongs to the LpxC family. Zn(2+) serves as cofactor.

It catalyses the reaction a UDP-3-O-[(3R)-3-hydroxyacyl]-N-acetyl-alpha-D-glucosamine + H2O = a UDP-3-O-[(3R)-3-hydroxyacyl]-alpha-D-glucosamine + acetate. It functions in the pathway glycolipid biosynthesis; lipid IV(A) biosynthesis; lipid IV(A) from (3R)-3-hydroxytetradecanoyl-[acyl-carrier-protein] and UDP-N-acetyl-alpha-D-glucosamine: step 2/6. Its function is as follows. Catalyzes the hydrolysis of UDP-3-O-myristoyl-N-acetylglucosamine to form UDP-3-O-myristoylglucosamine and acetate, the committed step in lipid A biosynthesis. This is UDP-3-O-acyl-N-acetylglucosamine deacetylase from Campylobacter jejuni (strain RM1221).